A 339-amino-acid polypeptide reads, in one-letter code: MSTVHEILCKLSLEGDHSTPASAYGSVKAYTNFDAERDALNIETAIKTKGVDEVTIVNILTNRSNEQRQDIAFAYQRRTKKELASALKSALSGHLETVILGLLKTPAQYDASELKASMKGLGTDEDSLIEIICSRTNQELQEINRVYKEMYKTDLEKDIISDTSGDFRKLMVALAKGRRAEDGSVIDYELIDQDARDLYDAGVKRKGTDVPKWISIMTERSVCHLQKVFERYKSYSPYDMLESIKKEVKGDLENAFLNLVQCIQNKPLYFADRLYDSMKGKGTRDKVLIXIMVSRSEVDMLKIRSEFKRKYGKSLYNYIQQDTKGDYQKALLYLCGGDD.

N-acetylserine is present on S2. Residues 2 to 24 (STVHEILCKLSLEGDHSTPASAY) form an S100A10-binding site region. Y24 is modified (phosphotyrosine; by SRC). Residue S26 is modified to Phosphoserine; by PKC. 2 Annexin repeats span residues 33-104 (FDAE…GLLK) and 105-176 (TPAQ…ALAK). K49 carries the N6-acetyllysine; alternate modification. A Glycyl lysine isopeptide (Lys-Gly) (interchain with G-Cter in SUMO1); alternate cross-link involves residue K49. K49 is covalently cross-linked (Glycyl lysine isopeptide (Lys-Gly) (interchain with G-Cter in SUMO2); alternate). The residue at position 152 (K152) is an N6-acetyllysine. S184 is subject to Phosphoserine. 2 Annexin repeats span residues 189-261 (ELID…NLVQ) and 265-336 (NKPL…YLCG). Phosphotyrosine is present on Y199. K227 is subject to N6-acetyllysine.

The protein belongs to the annexin family. Heterotetramer containing 2 light chains of S100A10/p11 and 2 heavy chains of ANXA2/p36. Interacts with ATP1B1. Interacts with DYSF. Interacts with COCH. Interacts (via repeat Annexin 1) with PCSK9 (via the C-terminal domain); the interaction inhibits the degradation of LDLR. Interacts with CEACAM1 (via the cytoplasmic domain); this interaction is regulated by phosphorylation of CEACAM1. Interacts with APPL2 and APPL1; targets APPL2 to endosomes and acting in parallel to RAB5A. Interacts with S100A4. May interact with UBAP2. Interacts with PLEKHG4B; this interaction is required for PLEKHG4B localization to cell-cell adhesions. In terms of assembly, (Microbial infection) Interacts with classical swine fever virus envelope glycoprotein E2. Post-translationally, ISGylated.

It localises to the secreted. The protein resides in the extracellular space. Its subcellular location is the extracellular matrix. The protein localises to the basement membrane. It is found in the melanosome. In terms of biological role, calcium-regulated membrane-binding protein whose affinity for calcium is greatly enhanced by anionic phospholipids. It binds two calcium ions with high affinity. May be involved in heat-stress response. Inhibits PCSK9-enhanced LDLR degradation, probably reduces PCSK9 protein levels via a translational mechanism but also competes with LDLR for binding with PCSK9. Binds to endosomes damaged by phagocytosis of particulate wear debris and participates in endosomal membrane stabilization, thereby limiting NLRP3 inflammasome activation. Required for endothelial cell surface plasmin generation and may support fibrinolytic surveillance and neoangiogenesis. Functionally, (Microbial infection) May serve as a receptor for classical swine fever virus (CSFV). Promotes CSFV infection. This chain is Annexin A2 (ANXA2), found in Sus scrofa (Pig).